The following is a 205-amino-acid chain: Probable GTP-binding protein EngB (205 aa).

The region spanning 29–203 is the EngB-type G domain; it reads QGAEIAFIGR…KAVLSQWFRS (175 aa). GTP contacts are provided by residues 37-44, 64-68, 82-85, 149-152, and 182-184; these read GRSNAGKS, GRTQM, DLPG, TKSD, and FSS. 2 residues coordinate Mg(2+): S44 and T66.

This sequence belongs to the TRAFAC class TrmE-Era-EngA-EngB-Septin-like GTPase superfamily. EngB GTPase family. Mg(2+) serves as cofactor.

Its function is as follows. Necessary for normal cell division and for the maintenance of normal septation. In Coxiella burnetii (strain CbuG_Q212) (Coxiella burnetii (strain Q212)), this protein is Probable GTP-binding protein EngB.